The chain runs to 286 residues: Nucleotide-binding protein PSPA7_5038 (286 aa).

8–15 (GRSGSGKS) contributes to the ATP binding site. 60 to 63 (DARN) lines the GTP pocket.

Belongs to the RapZ-like family.

Functionally, displays ATPase and GTPase activities. This is Nucleotide-binding protein PSPA7_5038 from Pseudomonas paraeruginosa (strain DSM 24068 / PA7) (Pseudomonas aeruginosa (strain PA7)).